Reading from the N-terminus, the 406-residue chain is CMP-sialic acid transporter 2 (406 aa).

Topologically, residues 1–41 are cytoplasmic; the sequence is MKNGMAECSVCRSRLVSPSSKAISRAYDNYNYKIRVSSKQR. The helical transmembrane segment at 42–62 threads the bilayer; sequence ALNVFLVVGDCMLVGLQPVLV. At 63 to 75 the chain is on the lumenal side; it reads YMSKVDGKFNFSP. A helical membrane pass occupies residues 76-96; it reads ISVNFLTEIAKVIFAMVMLLF. At 97–148 the chain is on the cytoplasmic side; sequence QARHQKVGEKPLLSLSTFVQAARNNMLLAVPAGLYAINNYLKFTMQLYFNPA. Residues 149 to 169 traverse the membrane as a helical segment; sequence TVKMLSNLKVLVIAVLLKMIM. Over 170–172 the chain is Lumenal; that stretch reads KRR. A helical transmembrane segment spans residues 173–193; it reads FSIIQWEALALLLIGISINQL. Over 194-201 the chain is Cytoplasmic; sequence RSLPEGAT. The helical transmembrane segment at 202 to 222 threads the bilayer; sequence TVAVPIATGAYICTFIFVTVP. Residues 223–245 lie on the Lumenal side of the membrane; it reads SLASVYNEYALKSQYDTSIYLQN. The helical transmembrane segment at 246-266 threads the bilayer; it reads LFLYGYGAIFNFLGILGTVIY. Over 267-282 the chain is Cytoplasmic; it reads KGPGSFDILQGHSRAT. Residues 283–303 traverse the membrane as a helical segment; the sequence is MFLILNNAAQGILSSFFFKYA. The Lumenal segment spans residues 304–323; that stretch reads DTILKKYSSTVATIFTGIAS. A helical transmembrane segment spans residues 324 to 344; the sequence is AALFGHILTMNFLLGISIVFI. Over 345-406 the chain is Cytoplasmic; sequence SMHQFFSPLS…SDDRVPLLPR (62 aa).

It belongs to the nucleotide-sugar transporter family. CMP-Sialate:CMP antiporter (TC 2.A.7.12) subfamily.

It is found in the golgi apparatus membrane. Sugar transporter involved in the transport of CMP-sialic acid from the cytoplasm into the Golgi. This Arabidopsis thaliana (Mouse-ear cress) protein is CMP-sialic acid transporter 2.